Here is a 514-residue protein sequence, read N- to C-terminus: Putative ribose/galactose/methyl galactoside import ATP-binding protein 3 (514 aa).

2 consecutive ABC transporter domains span residues 21–256 and 267–512; these read LRLD…VGRT and VPTD…SGRS. 53–60 provides a ligand contact to ATP; sequence GENGAGKS.

The protein belongs to the ABC transporter superfamily. Carbohydrate importer 2 (CUT2) (TC 3.A.1.2) family.

It is found in the cell inner membrane. It catalyses the reaction D-ribose(out) + ATP + H2O = D-ribose(in) + ADP + phosphate + H(+). It carries out the reaction D-galactose(out) + ATP + H2O = D-galactose(in) + ADP + phosphate + H(+). Its function is as follows. Part of an ABC transporter complex involved in carbohydrate import. Could be involved in ribose, galactose and/or methyl galactoside import. Responsible for energy coupling to the transport system. This Burkholderia cenocepacia (strain HI2424) protein is Putative ribose/galactose/methyl galactoside import ATP-binding protein 3.